The chain runs to 690 residues: Eukaryotic translation initiation factor 3 subunit B (690 aa).

A compositionally biased stretch (basic and acidic residues) spans 1–11; it reads MAKKKSEEHSG. Residues 1–33 form a disordered region; it reads MAKKKSEEHSGADANDSDYNEEPNFDDPPGYVD. The span at 15–25 shows a compositional bias: acidic residues; sequence NDSDYNEEPNF. In terms of domain architecture, RRM spans 57 to 141; that stretch reads SVVVVDNMPK…YTFAVNLFTD (85 aa). WD repeat units lie at residues 207 to 246, 292 to 331, 334 to 369, 442 to 484, and 530 to 575; these read TRER…KIQK, GDGM…LLDL, IKIA…TLME, EIRE…KPSL, and PDHF…IRRT. Positions 613–646 form a coiled coil; it reads EQKDRLRLTRASKELLEKRAQLRETFMEYRNKRI.

This sequence belongs to the eIF-3 subunit B family. Component of the eukaryotic translation initiation factor 3 (eIF-3) complex. The eIF-3 complex interacts with pix. Interacts with mxt.

It localises to the cytoplasm. Functionally, RNA-binding component of the eukaryotic translation initiation factor 3 (eIF-3) complex, which is involved in protein synthesis of a specialized repertoire of mRNAs and, together with other initiation factors, stimulates binding of mRNA and methionyl-tRNAi to the 40S ribosome. The eIF-3 complex specifically targets and initiates translation of a subset of mRNAs involved in cell proliferation. The polypeptide is Eukaryotic translation initiation factor 3 subunit B (Drosophila mojavensis (Fruit fly)).